A 70-amino-acid chain; its full sequence is Exodeoxyribonuclease 7 small subunit (70 aa).

It belongs to the XseB family. Heterooligomer composed of large and small subunits.

The protein resides in the cytoplasm. The enzyme catalyses Exonucleolytic cleavage in either 5'- to 3'- or 3'- to 5'-direction to yield nucleoside 5'-phosphates.. Its function is as follows. Bidirectionally degrades single-stranded DNA into large acid-insoluble oligonucleotides, which are then degraded further into small acid-soluble oligonucleotides. The polypeptide is Exodeoxyribonuclease 7 small subunit (Streptococcus pneumoniae serotype 2 (strain D39 / NCTC 7466)).